We begin with the raw amino-acid sequence, 405 residues long: L-carnitine CoA-transferase (405 aa).

Positions 97 and 104 each coordinate CoA. Residue Asp169 is the Nucleophile of the active site.

The protein belongs to the CoA-transferase III family. CaiB subfamily. Homodimer.

The protein resides in the cytoplasm. The enzyme catalyses crotonobetainyl-CoA + (R)-carnitine = crotonobetaine + (R)-carnitinyl-CoA. It carries out the reaction 4-(trimethylamino)butanoyl-CoA + (R)-carnitine = (R)-carnitinyl-CoA + 4-(trimethylamino)butanoate. It participates in amine and polyamine metabolism; carnitine metabolism. In terms of biological role, catalyzes the reversible transfer of the CoA moiety from gamma-butyrobetainyl-CoA to L-carnitine to generate L-carnitinyl-CoA and gamma-butyrobetaine. Is also able to catalyze the reversible transfer of the CoA moiety from gamma-butyrobetainyl-CoA or L-carnitinyl-CoA to crotonobetaine to generate crotonobetainyl-CoA. The protein is L-carnitine CoA-transferase of Escherichia coli O7:K1 (strain IAI39 / ExPEC).